Reading from the N-terminus, the 245-residue chain is Probable septum site-determining protein MinC (245 aa).

A compositionally biased stretch (basic and acidic residues) spans 112-132; that stretch reads ARERPLESAEPVAPKKPEKPP. Residues 112–140 are disordered; it reads ARERPLESAEPVAPKKPEKPPEPTVKPTR.

This sequence belongs to the MinC family. In terms of assembly, interacts with MinD and FtsZ.

In terms of biological role, cell division inhibitor that blocks the formation of polar Z ring septums. Rapidly oscillates between the poles of the cell to destabilize FtsZ filaments that have formed before they mature into polar Z rings. Prevents FtsZ polymerization. The chain is Probable septum site-determining protein MinC from Pseudomonas fluorescens (strain Pf0-1).